We begin with the raw amino-acid sequence, 707 residues long: Elongation factor G (707 aa).

The tr-type G domain occupies 8–297; sequence ERVRNIGIAA…AVVDYLPSPV (290 aa). Residues 17 to 24, 96 to 100, and 150 to 153 contribute to the GTP site; these read AHIDAGKT, DTPGH, and NKMD.

This sequence belongs to the TRAFAC class translation factor GTPase superfamily. Classic translation factor GTPase family. EF-G/EF-2 subfamily.

Its subcellular location is the cytoplasm. Catalyzes the GTP-dependent ribosomal translocation step during translation elongation. During this step, the ribosome changes from the pre-translocational (PRE) to the post-translocational (POST) state as the newly formed A-site-bound peptidyl-tRNA and P-site-bound deacylated tRNA move to the P and E sites, respectively. Catalyzes the coordinated movement of the two tRNA molecules, the mRNA and conformational changes in the ribosome. The sequence is that of Elongation factor G from Synechococcus sp. (strain JA-2-3B'a(2-13)) (Cyanobacteria bacterium Yellowstone B-Prime).